Reading from the N-terminus, the 480-residue chain is Cyclin L homolog cyl-1 (480 aa).

A disordered region spans residues 25-58; the sequence is PKEQNGNVEPKKEEDEKFESTYKQNENTQITPSS. Residues 33–44 are compositionally biased toward basic and acidic residues; that stretch reads EPKKEEDEKFES. Over residues 45 to 58 the composition is skewed to polar residues; the sequence is TYKQNENTQITPSS. A Cyclin N-terminal domain is found at 91 to 230; that stretch reads PSLVDGLSKE…RRILATLGFV (140 aa). A disordered region spans residues 368 to 480; the sequence is KMAPDGEKST…ESSTPPRSRR (113 aa). 2 stretches are compositionally biased toward basic and acidic residues: residues 384-409 and 418-442; these read KDSR…GKKE and NDRD…DEKK. The segment covering 443–453 has biased composition (basic residues); that stretch reads DRRKRTRSRSR. Positions 454 to 472 are enriched in basic and acidic residues; it reads DRKDKNRNRDVGKRYRKES.

The protein belongs to the cyclin family.

Its function is as follows. Involved in pre-mRNA splicing. Functions in association with cyclin-dependent kinases (CDKs). Involved in induction of expression of heat shock protein hsp-16.2 in response to heat shock. Plays a role in male tail development, perhaps acting together with cell cycle regulators cdc-25.2, cdk-1, cyb-3, and cyd-1. This Caenorhabditis elegans protein is Cyclin L homolog cyl-1.